Reading from the N-terminus, the 135-residue chain is Small ribosomal subunit protein eS6 (135 aa).

It belongs to the eukaryotic ribosomal protein eS6 family.

In Methanospirillum hungatei JF-1 (strain ATCC 27890 / DSM 864 / NBRC 100397 / JF-1), this protein is Small ribosomal subunit protein eS6.